The sequence spans 2220 residues: Non-reducing polyketide synthase stbA (2220 aa).

The segment at 10 to 255 (IFSPQNSPPK…HDATNTDMAQ (246 aa)) is N-terminal acylcarrier protein transacylase domain (SAT). The region spanning 379–803 (SDAIAVVGAG…GSNSALICSE (425 aa)) is the Ketosynthase family 3 (KS3) domain. Active-site for beta-ketoacyl synthase activity residues include Cys-551, His-687, and His-726. The malonyl-CoA:ACP transacylase (MAT) domain stretch occupies residues 906–1207 (LAFSGQSRTN…ADATQHTFQA (302 aa)). Residue Ser-993 is the For acyl/malonyl transferase activity of the active site. Positions 1287 to 1414 (EPRAAQLVRY…GDFTMTAGPH (128 aa)) are N-terminal hotdog fold. The PKS/mFAS DH domain maps to 1287–1589 (EPRAAQLVRY…FHKTSMTKLL (303 aa)). Residues 1292–1588 (QLVRYKGALG…HFHKTSMTKL (297 aa)) form a product template (PT) domain region. Residue His-1323 is the Proton acceptor; for dehydratase activity of the active site. The tract at residues 1436–1589 (DAEKLRKRTA…FHKTSMTKLL (154 aa)) is C-terminal hotdog fold. Asp-1500 acts as the Proton donor; for dehydratase activity in catalysis. Carrier domains are found at residues 1634-1711 (AAGP…SGGA) and 1742-1821 (PAGP…AADV). Ser-1671 and Ser-1779 each carry O-(pantetheine 4'-phosphoryl)serine. The thioesterase (TE) domain stretch occupies residues 1879 to 2210 (TRFRMETVVY…YDFIFTELEN (332 aa)). Active-site for thioesterase activity residues include Ser-1999 and Asp-2148.

It catalyses the reaction 3 malonyl-CoA + acetyl-CoA + 2 H(+) = orsellinate + 3 CO2 + 4 CoA. The protein operates within secondary metabolite biosynthesis; terpenoid biosynthesis. In terms of biological role, non-reducing polyketide synthase; part of the cluster that mediates the biosynthesis of LL-Z1272-beta, also known as ilicicolin B, a prenylated aryl-aldehyde produced by several fungi and that serves as a key pathway intermediate for many fungal meroterpenoids. The first step in the pathway is performed by the non-reducing polyketide synthase stbA that produces orsellinic acid by condensing acetyl-CoA with 3 malonyl-CoA units. The prenyltransferase stbC then prenylates orsenilic acid into grifolic acid. Finally, grifolic acid is reduced to ilicicolin B by the NRPS-like protein stbB. The sequence is that of Non-reducing polyketide synthase stbA from Stachybotrys bisbyi (Hyalostachybotrys bisbyi).